The chain runs to 354 residues: Uroporphyrinogen decarboxylase (354 aa).

Substrate contacts are provided by residues 27 to 31, aspartate 77, tyrosine 154, threonine 209, and histidine 327; that span reads RQAGR.

Belongs to the uroporphyrinogen decarboxylase family. In terms of assembly, homodimer.

It is found in the cytoplasm. It carries out the reaction uroporphyrinogen III + 4 H(+) = coproporphyrinogen III + 4 CO2. It participates in porphyrin-containing compound metabolism; protoporphyrin-IX biosynthesis; coproporphyrinogen-III from 5-aminolevulinate: step 4/4. Functionally, catalyzes the decarboxylation of four acetate groups of uroporphyrinogen-III to yield coproporphyrinogen-III. In Histophilus somni (strain 2336) (Haemophilus somnus), this protein is Uroporphyrinogen decarboxylase.